Consider the following 283-residue polypeptide: Non-selective voltage-gated ion channel VDAC3 (283 aa).

Cys-2 is modified (N-acetylcysteine). At Thr-4 the chain carries Phosphothreonine. N6-acetyllysine occurs at positions 12, 15, and 20. The next 2 membrane-spanning stretches (beta stranded) occupy residues 26 to 35 (MVKIDLRTKS) and 39 to 47 (VEFSTSGHA). Lys-53 is covalently cross-linked (Glycyl lysine isopeptide (Lys-Gly) (interchain with G-Cter in ubiquitin)). The next 3 beta stranded transmembrane spans lie at 54-64 (ASGNLETKYKI), 69-76 (LTFTQKWN), and 80-89 (TLGTEISLEN). Lys-90 is subject to N6-acetyllysine. Residues 95 to 104 (LKLTLDTIFV) traverse the membrane as a beta stranded segment. Glycyl lysine isopeptide (Lys-Gly) (interchain with G-Cter in ubiquitin) cross-links involve residues Lys-109 and Lys-110. Transmembrane regions (beta stranded) follow at residues 111 to 120 (SGKLKASYKR), 123 to 130 (FSIGSNVD), 137 to 145 (TIYGWAVLA), 150 to 158 (LAGYQMSFD), 163 to 175 (KLSQ…GYKA), 178 to 185 (FQLHTHVN), 189 to 198 (EFGGSIYQKV), 202 to 211 (IETSINLAWT), 218 to 227 (RFGIAAKYKL), and 231 to 238 (TSLSAKVN). Residue Ser-241 is modified to Phosphoserine. Residues 242-244 (LIG) and 260-264 (SALID) each bind NAD(+). A run of 2 beta stranded transmembrane segments spans residues 242-251 (LIGLGYTQTL) and 254-263 (GVKLTLSALI). Lys-266 bears the N6-acetyllysine; alternate mark. Residue Lys-266 forms a Glycyl lysine isopeptide (Lys-Gly) (interchain with G-Cter in ubiquitin); alternate linkage. A beta stranded membrane pass occupies residues 273–282 (HKVGLGFELE).

The protein belongs to the eukaryotic mitochondrial porin family. In terms of assembly, interacts with ARMC12 in a TBC1D21-dependent manner. Interacts with MISFA. Post-translationally, ubiquitinated by PRKN during mitophagy, leading to its degradation and enhancement of mitophagy. Deubiquitinated by USP30.

The protein localises to the mitochondrion outer membrane. Its subcellular location is the membrane. The enzyme catalyses chloride(in) = chloride(out). The catalysed reaction is K(+)(in) = K(+)(out). In terms of biological role, non-selective voltage-gated ion channel that mediates the transport of anions and cations through the mitochondrion outer membrane and plasma membrane. Forms a high-conducting channel with a stable open state and a voltage-induced closure with a mild preference for anions over cations. Involved in male fertility and sperm mitochondrial sheath formation. In Sus scrofa (Pig), this protein is Non-selective voltage-gated ion channel VDAC3.